The primary structure comprises 257 residues: Ribonuclease HII (257 aa).

The RNase H type-2 domain maps to 72–257 (TYIAGIDEVG…FAPIKDMIQK (186 aa)). A divalent metal cation is bound by residues D78, E79, and D170.

Belongs to the RNase HII family. The cofactor is Mn(2+). It depends on Mg(2+) as a cofactor.

It is found in the cytoplasm. It carries out the reaction Endonucleolytic cleavage to 5'-phosphomonoester.. Its function is as follows. Endonuclease that specifically degrades the RNA of RNA-DNA hybrids. In Bacillus cereus (strain B4264), this protein is Ribonuclease HII.